A 515-amino-acid chain; its full sequence is Peroxisomal catalase A (515 aa).

The residue at position 2 (Ser2) is an N-acetylserine. Residues His70 and Asn143 contribute to the active site. Residue Tyr355 coordinates heme. A Microbody targeting signal motif is present at residues 513–515 (SKF).

Belongs to the catalase family. Homotetramer. The cofactor is heme.

It is found in the peroxisome matrix. It catalyses the reaction 2 H2O2 = O2 + 2 H2O. Its function is as follows. Catalyzes the degradation of hydrogen peroxide (H(2)O(2)) generated by peroxisomal oxidases to water and oxygen, thereby protecting cells from the toxic effects of hydrogen peroxide. The protein is Peroxisomal catalase A (CTA1) of Saccharomyces cerevisiae (strain ATCC 204508 / S288c) (Baker's yeast).